The primary structure comprises 635 residues: Cerevisin (635 aa).

A signal peptide spans Met1–Ala19. A propeptide spanning residues Leu20–Thr280 is cleaved from the precursor. 4 stretches are compositionally biased toward basic and acidic residues: residues Ile35–Thr50, Lys74–Gly85, Ser94–Ser109, and Gly126–Lys136. The disordered stretch occupies residues Ile35–Gly155. The segment covering Met137 to Gly155 has biased composition (basic residues). The 97-residue stretch at Arg182–Glu278 folds into the Inhibitor I9 domain. One can recognise a Peptidase S8 domain in the interval Pro289–Ile614. Active-site charge relay system residues include Asp325 and His357. Cys460 and Cys491 are disulfide-bonded. The active-site Charge relay system is the Ser519. Positions Asp575–Ile635 are excised as a propeptide. N-linked (GlcNAc...) asparagine glycosylation occurs at Asn594.

The protein belongs to the peptidase S8 family. Post-translationally, activated by N- and C-terminal proteolytic cleavage. Protease B (PrB/PRB1) processing requires at least 4 cleavages. First, the signal peptide is removed from the 76 kDa preproprotease B by signal peptidase in the ER. Then, PrB removes its own Pro-region (in trans) at the N-terminus, producing a 39 kDa form before exiting the ER. In the Golgi complex, the C-terminal Post-region of the 40 kDa proprotease B undergoes protease A (PrA/PEP4)-mediated processing to a 37 kDa intermediate, which in turn is quickly processed again by PrB in trans to yield the 31 kDa mature PrB. Glycosylated. Preproprotease B is a 76 kDa unglycosylated precursor that enters the endoplasmic reticulum (ER), where it receives one Asn-linked and an undetermined number of non-Asn-linked carbohydrate side chains. In the Golgi complex, the 39 kDa form becomes 40 kDa, due to elaboration of the Asn-linked side chain. The ultimate processing step removes a peptide containing the Asn-linked chain. Mature PrB has only non-Asn-linked carbohydrates.

The protein resides in the vacuole. It carries out the reaction Hydrolysis of proteins with broad specificity, and of Bz-Arg-OEt &gt; Ac-Tyr-OEt. Does not hydrolyze peptide amides.. In terms of biological role, vacuolar proteinase B involved in protein degradation in the vacuole. Among other substrates, acts on carboxypeptidase Y (cpY/PRC1) to activate it by processing its Pro-peptide. Required for meiosis and spore formation, and for optimal survival in stationary phase. The chain is Cerevisin (PRB1) from Saccharomyces cerevisiae (strain ATCC 204508 / S288c) (Baker's yeast).